The following is a 210-amino-acid chain: Small ribosomal subunit protein uS3 (210 aa).

Positions 38–106 constitute a KH type-2 domain; it reads IRAWLKKRLA…EVQINIVEIR (69 aa).

This sequence belongs to the universal ribosomal protein uS3 family. Part of the 30S ribosomal subunit. Forms a tight complex with proteins S10 and S14.

Functionally, binds the lower part of the 30S subunit head. Binds mRNA in the 70S ribosome, positioning it for translation. The sequence is that of Small ribosomal subunit protein uS3 from Magnetococcus marinus (strain ATCC BAA-1437 / JCM 17883 / MC-1).